The sequence spans 292 residues: Very long chain fatty acid elongase 2 (292 aa).

7 consecutive transmembrane segments (helical) span residues 29–49 (WFLLDSYLPTFILTITYLLSI), 67–87 (ILTLYNLAITLLSAYMLVELI), 115–135 (VLWWYYFSKLVEFLDTIFFVL), 153–173 (MFNIWWCVLNWIPCGQSFFGP), 175–195 (LNSFIHILMYSYYGLSVFPSM), 205–225 (LTQAQLVQFVLTITHTLSAVV), and 230–250 (FPFGCLIFQSSYMMTLVILFL). A Di-lysine motif motif is present at residues 289 to 292 (KKAQ).

Belongs to the ELO family. ELOVL2 subfamily. As to quaternary structure, interacts with TECR. Highly expressed in testis, lower level in liver. Weakly expressed in white adipose tissue, brain and kidney.

It localises to the endoplasmic reticulum membrane. It catalyses the reaction a very-long-chain acyl-CoA + malonyl-CoA + H(+) = a very-long-chain 3-oxoacyl-CoA + CO2 + CoA. It carries out the reaction (5Z,8Z,11Z,14Z)-eicosatetraenoyl-CoA + malonyl-CoA + H(+) = (7Z,10Z,13Z,16Z)-3-oxodocosatetraenoyl-CoA + CO2 + CoA. The catalysed reaction is (7Z,10Z,13Z,16Z)-docosatetraenoyl-CoA + malonyl-CoA + H(+) = (9Z,12Z,15Z,18Z)-3-oxotetracosatetraenoyl-CoA + CO2 + CoA. The enzyme catalyses (5Z,8Z,11Z,14Z,17Z)-eicosapentaenoyl-CoA + malonyl-CoA + H(+) = 3-oxo-(7Z,10Z,13Z,16Z,19Z)-docosapentaenoyl-CoA + CO2 + CoA. It catalyses the reaction (7Z,10Z,13Z,16Z,19Z)-docosapentaenoyl-CoA + malonyl-CoA + H(+) = (9Z,12Z,15Z,18Z,21Z)-3-oxotetracosapentaenoyl-CoA + CO2 + CoA. Its pathway is lipid metabolism; polyunsaturated fatty acid biosynthesis. Catalyzes the first and rate-limiting reaction of the four reactions that constitute the long-chain fatty acids elongation cycle. This endoplasmic reticulum-bound enzymatic process allows the addition of 2 carbons to the chain of long- and very long-chain fatty acids (VLCFAs) per cycle. Condensing enzyme that catalyzes the synthesis of polyunsaturated very long chain fatty acid (C20- and C22-PUFA), acting specifically toward polyunsaturated acyl-CoA with the higher activity toward C20:4(n-6) acyl-CoA. May participate in the production of polyunsaturated VLCFAs of different chain lengths that are involved in multiple biological processes as precursors of membrane lipids and lipid mediators. Essential for the formation of C24:5(n-6) up to C30:5(n-6) PUFAs in testis, these fatty acids being indispensable for normal spermatogenesis and fertility. The protein is Very long chain fatty acid elongase 2 of Mus musculus (Mouse).